A 288-amino-acid polypeptide reads, in one-letter code: MSTISIHRTETLRITHARSRIFRQRYRRTIPLWKLTINSRSSDTSKKEELSVQISIPPQVDQSRPEGLRFDRLQPPEPEFGHEDRFEFGKFVAREAMLDEEYWTAAWLRAESHWEDRSNERYVDNYKRKFAEQEFNAIKRRCKGMQGQKCSCIVAVKKEEKHIKRSVIKSVVGTLDLSIRYFLQGETFPGEKVKSQLFCSINQEGSNRYGYIANLCVAKSARRQGIACNMLRFAVESARLSGVEQVYVHVHKNNSVAQELYQKTGFKIVETGKFESLDDDTYLLQYTS.

The N-terminal 111 residues, 1-111, are a transit peptide targeting the chloroplast; the sequence is MSTISIHRTE…YWTAAWLRAE (111 aa). Residues 151–288 enclose the N-acetyltransferase domain; that stretch reads SCIVAVKKEE…DDTYLLQYTS (138 aa). Residues 215–217, 223–228, 254–256, and Tyr261 each bind acetyl-CoA; these read LCV, RQGIAC, and NSV. Tyr261 functions as the Proton donor in the catalytic mechanism.

This sequence belongs to the acetyltransferase family. GNAT subfamily. Oligomer. Autoacetylated. Expressed in green tissues and in roots.

It is found in the plastid. The protein resides in the chloroplast. It localises to the cytoplasm. The protein localises to the perinuclear region. The catalysed reaction is an N-terminal L-alpha-aminoacyl-[protein] + acetyl-CoA = N-terminal N(alpha)-acetyl-L-alpha-aminoacyl-[protein] + CoA + H(+). It catalyses the reaction L-lysyl-[protein] + acetyl-CoA = N(6)-acetyl-L-lysyl-[protein] + CoA + H(+). The enzyme catalyses N-terminal L-alanyl-[protein] + acetyl-CoA = N-terminal N(alpha)-acetyl-L-alanyl-[protein] + CoA + H(+). It carries out the reaction N-terminal L-seryl-[protein] + acetyl-CoA = N-terminal N(alpha)-acetyl-L-seryl-[protein] + CoA + H(+). The catalysed reaction is N-terminal L-threonyl-[protein] + acetyl-CoA = N-terminal N(alpha)-acetyl-L-threonyl-[protein] + CoA + H(+). It catalyses the reaction N-terminal L-methionyl-[protein] + acetyl-CoA = N-terminal N(alpha)-acetyl-L-methionyl-[protein] + CoA + H(+). The enzyme catalyses N-terminal L-valyl-[protein] + acetyl-CoA = N-terminal N(alpha)-acetyl-L-valyl-[protein] + CoA + H(+). In terms of biological role, protein acetyltransferase with dual specificity triggering both N-alpha-acetylation (NTA), with a large spectrum of modified N-termini, including methionine, alanine, serine, threonine and to a lower extent valine as substrates, and epsilon-lysine acetylation (KA). The chain is GCN5-related N-acetyltransferase 6, chloroplastic from Arabidopsis thaliana (Mouse-ear cress).